A 376-amino-acid chain; its full sequence is Putative F-box protein At1g53370 (376 aa).

Residues 22–71 (RNYIDSIPVDLLIDILSRFPPKSIARFYCVSKLWESILRGPDFTELYLTK) form the F-box domain.

The polypeptide is Putative F-box protein At1g53370 (Arabidopsis thaliana (Mouse-ear cress)).